The chain runs to 435 residues: Elongation factor 1-alpha (435 aa).

The tr-type G domain maps to 4–229; it reads KPHLNLIVIG…DQLEIPPKPV (226 aa). Residues 13 to 20 form a G1 region; the sequence is GHVDHGKS. 13–20 contributes to the GTP binding site; sequence GHVDHGKS. Ser-20 lines the Mg(2+) pocket. The segment at 69–73 is G2; it reads GVTIN. The interval 90 to 93 is G3; that stretch reads DAPG. Residues 90-94 and 152-155 each bind GTP; these read DAPGH and NKMD. Residues 152-155 are G4; it reads NKMD. A G5 region spans residues 193–195; it reads VAP.

It belongs to the TRAFAC class translation factor GTPase superfamily. Classic translation factor GTPase family. EF-Tu/EF-1A subfamily.

The protein resides in the cytoplasm. It catalyses the reaction GTP + H2O = GDP + phosphate + H(+). GTP hydrolase that promotes the GTP-dependent binding of aminoacyl-tRNA to the A-site of ribosomes during protein biosynthesis. The protein is Elongation factor 1-alpha of Sulfolobus acidocaldarius (strain ATCC 33909 / DSM 639 / JCM 8929 / NBRC 15157 / NCIMB 11770).